We begin with the raw amino-acid sequence, 441 residues long: Alpha-monoglucosyldiacylglycerol synthase (441 aa).

The protein belongs to the glycosyltransferase group 1 family. Glycosyltransferase 4 subfamily. It depends on Mg(2+) as a cofactor.

It localises to the cell membrane. It catalyses the reaction a 1,2-diacyl-sn-glycerol + UDP-alpha-D-glucose = a 1,2-diacyl-3-O-(alpha-D-glucopyranosyl)-sn-glycerol + UDP + H(+). Activated by the negatively charged lipid phosphatidylglycerol (PG). Functionally, glucosyltransferase involved in the biosynthesis of the non-bilayer-prone membrane lipid alpha-monoglucosyldiacylglycerol. This is a major component for maintaining a certain anionic lipid surface charge density, for balancing the bilayer to non-bilayer phase equilibria and for keeping a constant lipid bilayer spontaneous curvature (curvature packing stress). Catalyzes the transfer of a glucosyl residue from UDP-Glc to diacylglycerol (DAG) acceptor to form the corresponding alpha-glucosyl-DAG (1,2-diacyl-3-O-(alpha-D-glucopyranosyl)-sn-glycerol). It can only use UDP-Glc as sugar donor. The sequence is that of Alpha-monoglucosyldiacylglycerol synthase from Streptococcus pneumoniae (strain ATCC BAA-255 / R6).